A 114-amino-acid chain; its full sequence is Flagellar hook-basal body complex protein FliE (114 aa).

The protein belongs to the FliE family.

Its subcellular location is the bacterial flagellum basal body. This is Flagellar hook-basal body complex protein FliE from Burkholderia multivorans (strain ATCC 17616 / 249).